The primary structure comprises 244 residues: 5-oxoprolinase subunit A (244 aa).

This sequence belongs to the LamB/PxpA family. Forms a complex composed of PxpA, PxpB and PxpC.

The catalysed reaction is 5-oxo-L-proline + ATP + 2 H2O = L-glutamate + ADP + phosphate + H(+). Catalyzes the cleavage of 5-oxoproline to form L-glutamate coupled to the hydrolysis of ATP to ADP and inorganic phosphate. In Escherichia coli O6:K15:H31 (strain 536 / UPEC), this protein is 5-oxoprolinase subunit A.